Reading from the N-terminus, the 312-residue chain is Lipoyl synthase (312 aa).

Over residues 1-10 (MNEAPAEKQK) the composition is skewed to basic and acidic residues. The interval 1–20 (MNEAPAEKQKPQQGKRFSER) is disordered. [4Fe-4S] cluster-binding residues include cysteine 51, cysteine 56, cysteine 62, cysteine 77, cysteine 81, cysteine 84, and serine 290. The region spanning 63-280 (WSRKTATYLA…RSVGESLGLF (218 aa)) is the Radical SAM core domain.

Belongs to the radical SAM superfamily. Lipoyl synthase family. The cofactor is [4Fe-4S] cluster.

The protein resides in the cytoplasm. It catalyses the reaction [[Fe-S] cluster scaffold protein carrying a second [4Fe-4S](2+) cluster] + N(6)-octanoyl-L-lysyl-[protein] + 2 oxidized [2Fe-2S]-[ferredoxin] + 2 S-adenosyl-L-methionine + 4 H(+) = [[Fe-S] cluster scaffold protein] + N(6)-[(R)-dihydrolipoyl]-L-lysyl-[protein] + 4 Fe(3+) + 2 hydrogen sulfide + 2 5'-deoxyadenosine + 2 L-methionine + 2 reduced [2Fe-2S]-[ferredoxin]. It participates in protein modification; protein lipoylation via endogenous pathway; protein N(6)-(lipoyl)lysine from octanoyl-[acyl-carrier-protein]: step 2/2. Functionally, catalyzes the radical-mediated insertion of two sulfur atoms into the C-6 and C-8 positions of the octanoyl moiety bound to the lipoyl domains of lipoate-dependent enzymes, thereby converting the octanoylated domains into lipoylated derivatives. This is Lipoyl synthase from Chlamydia felis (strain Fe/C-56) (Chlamydophila felis).